Consider the following 274-residue polypeptide: Putative phosphoenolpyruvate synthase regulatory protein (274 aa).

157–164 contacts ADP; that stretch reads GVSRCGKT.

It belongs to the pyruvate, phosphate/water dikinase regulatory protein family. PSRP subfamily.

The enzyme catalyses [pyruvate, water dikinase] + ADP = [pyruvate, water dikinase]-phosphate + AMP + H(+). It catalyses the reaction [pyruvate, water dikinase]-phosphate + phosphate + H(+) = [pyruvate, water dikinase] + diphosphate. In terms of biological role, bifunctional serine/threonine kinase and phosphorylase involved in the regulation of the phosphoenolpyruvate synthase (PEPS) by catalyzing its phosphorylation/dephosphorylation. This chain is Putative phosphoenolpyruvate synthase regulatory protein, found in Bordetella avium (strain 197N).